The following is a 240-amino-acid chain: Protein RoBo-1 (240 aa).

The first 26 residues, 1-26 (MSWFLVLKCLLTVCIISHLSVSSTES), serve as a signal peptide directing secretion. N42 carries an N-linked (GlcNAc...) asparagine glycan. 5 disulfides stabilise this stretch: C47–C76, C81–C102, C103–C108, C127–C151, and C144–C171. Residue N153 is glycosylated (N-linked (GlcNAc...) asparagine).

Belongs to the CNF-like-inhibitor family. In terms of processing, N-glycosylated. As to expression, expressed abundantly in bone, including the lengthening growth plate where cartilage is remodeled into bone.

It localises to the secreted. May play a novel role in the growth or remodeling of bone. This chain is Protein RoBo-1, found in Rattus norvegicus (Rat).